Here is a 378-residue protein sequence, read N- to C-terminus: Protein RecA (378 aa).

Position 79-86 (79-86 (GPESSGKT)) interacts with ATP.

Belongs to the RecA family.

The protein resides in the cytoplasm. Its function is as follows. Can catalyze the hydrolysis of ATP in the presence of single-stranded DNA, the ATP-dependent uptake of single-stranded DNA by duplex DNA, and the ATP-dependent hybridization of homologous single-stranded DNAs. It interacts with LexA causing its activation and leading to its autocatalytic cleavage. In Streptococcus equi subsp. zooepidemicus (strain H70), this protein is Protein RecA.